We begin with the raw amino-acid sequence, 401 residues long: L-rhamnonate dehydratase (401 aa).

Substrate is bound by residues His-29 and Arg-55. Positions 222, 248, and 276 each coordinate Mg(2+). Residue His-325 is the Proton acceptor of the active site. Glu-345 contributes to the substrate binding site.

Belongs to the mandelate racemase/muconate lactonizing enzyme family. RhamD subfamily. In terms of assembly, homooctamer; tetramer of dimers. Requires Mg(2+) as cofactor.

The catalysed reaction is L-rhamnonate = 2-dehydro-3-deoxy-L-rhamnonate + H2O. Catalyzes the dehydration of L-rhamnonate to 2-keto-3-deoxy-L-rhamnonate (KDR). This chain is L-rhamnonate dehydratase, found in Klebsiella pneumoniae (strain 342).